A 528-amino-acid polypeptide reads, in one-letter code: Facilitator of iron transport 1 (528 aa).

The first 18 residues, 1–18, serve as a signal peptide directing secretion; sequence MKLSSAFVLSAITVAALG. Repeat copies occupy residues 20–98, 99–168, and 169–233. The segment at 20 to 274 is 4 X approximate tandem repeats; the sequence is SITTTITATK…ERAPASTVAT (255 aa). 3 disordered regions span residues 79 to 100, 145 to 172, and 214 to 234; these read SIVEPSTSAQGTSADEGSGSSI, AAETSVAEPSTSAQGTSADEGSGSSITT, and ASPVTSVAEPSASTDEGSGSS. Polar residues-rich tracts occupy residues 81–93 and 145–163; these read VEPSTSAQGTSAD and AAETSVAEPSTSAQGTSAD. The stretch at 234-274 is one 1-4; truncated repeat; it reads SITTTITATKNGHVYTKTVTQDATFVWTGEGERAPASTVAT. Repeat copies occupy residues 289-294, 295-300, 301-306, 307-312, 313-318, 319-324, 325-330, 331-336, 337-342, 343-348, 349-353, and 354-359. The tract at residues 289 to 359 is 12 X 6 AA approximate tandem repeats, Ser/Thr-rich; it reads SIVEASSAVE…AVETSAVETS (71 aa). Low complexity-rich tracts occupy residues 298–388 and 398–435; these read ETSS…QASS and TSSVVPTFSSTTTENSSNSKSTSAVVASTTTSSESSAT. The interval 298-471 is disordered; sequence ETSSAAETSS…SNNWSSSSSA (174 aa). An N-linked (GlcNAc...) asparagine glycan is attached at Asn412. Residues 446 to 457 show a composition bias toward polar residues; that stretch reads YTESSSRDAQSV. The span at 462 to 471 shows a compositional bias: low complexity; that stretch reads SNNWSSSSSA. An N-linked (GlcNAc...) asparagine glycan is attached at Asn464. 488–495 serves as a coordination point for ATP; it reads GIFTNGKS. N-linked (GlcNAc...) asparagine glycosylation is present at Asn503. A lipid anchor (GPI-anchor amidated glycine) is attached at Gly506. The propeptide at 507-528 is removed in mature form; that stretch reads AADSIAAGTGLMGAALAAVIFL.

In terms of processing, the GPI-anchor is attached to the protein in the endoplasmic reticulum and serves to target the protein to the cell surface. There, the glucosamine-inositol phospholipid moiety is cleaved off and the GPI-modified mannoprotein is covalently attached via its lipidless GPI glycan remnant to the 1,6-beta-glucan of the outer cell wall layer.

The protein localises to the secreted. It localises to the cell wall. It is found in the membrane. Its function is as follows. Involved in the uptake of non-siderophore sources of iron and the siderophores ferrioxamine B and ferrichrome. Has a role in the retention of iron in the cell wall and periplasmic space. The protein is Facilitator of iron transport 1 (FIT1) of Saccharomyces cerevisiae (strain ATCC 204508 / S288c) (Baker's yeast).